Reading from the N-terminus, the 1479-residue chain is Chromosome partition protein MukB (1479 aa).

34–41 serves as a coordination point for ATP; it reads GGNGAGKS. Coiled coils occupy residues 337 to 418, 511 to 604, 780 to 810, 847 to 1116, and 1206 to 1265; these read LNLV…QYQQ, QAER…APVW, RAAREMRLEGLRDEREALAEQYATLSFDVQK, ELDR…AKAG, and DDPV…LQAV. A flexible hinge region spans residues 666–783; sequence PGGSEDPRLN…EVPLFGRAAR (118 aa).

It belongs to the SMC family. MukB subfamily. In terms of assembly, homodimerization via its hinge domain. Binds to DNA via its C-terminal region. Interacts, and probably forms a ternary complex, with MukE and MukF via its C-terminal region. The complex formation is stimulated by calcium or magnesium. Interacts with tubulin-related protein FtsZ.

The protein localises to the cytoplasm. The protein resides in the nucleoid. Its function is as follows. Plays a central role in chromosome condensation, segregation and cell cycle progression. Functions as a homodimer, which is essential for chromosome partition. Involved in negative DNA supercoiling in vivo, and by this means organize and compact chromosomes. May achieve or facilitate chromosome segregation by condensation DNA from both sides of a centrally located replisome during cell division. This chain is Chromosome partition protein MukB, found in Pectobacterium atrosepticum (strain SCRI 1043 / ATCC BAA-672) (Erwinia carotovora subsp. atroseptica).